The sequence spans 414 residues: MATHSSRSENKDAGEEDELRRRNPYEVLGIPSNSTDQEIKSAYRRMALRYHPDKNPDDPVAAEMFKEVTFAYEVLSDPENRRLYDTTGSEAVGPENEDLELDLSSLGAVNTIFAALFNKLGVQIKTTVSANLLGEALNGTVTTLPLMVGQVVSRKVEKQSAHFYSVTLTEEEAQDGLICKVHSSAKNKFKLLYFDQVENGGLSLALQEDSRKTGKLSTAGLYFFGFPVYRFDHRVNSRALSRDPETGFFKRLDAFQPFEITELKAGSHVFAVYGDNFFKSVSYTLEIFSSAPFGNEKESLRSTEAQIVSKRTELLKFEAEYHEVFAQFTEMASKCTGEVQEIDELLKRRNEICAAYTIFPPTKQGSSKSRSWSKKKSSLLMEPREEGEVAVREEGGVKKKKWYNIQLRQDKKKN.

A compositionally biased stretch (basic and acidic residues) spans 1-24 (MATHSSRSENKDAGEEDELRRRNP). Residues 1–36 (MATHSSRSENKDAGEEDELRRRNPYEVLGIPSNSTD) form a disordered region. A J domain is found at 23–88 (NPYEVLGIPS…ENRRLYDTTG (66 aa)). Residues 296–324 (EKESLRSTEAQIVSKRTELLKFEAEYHEV) adopt a coiled-coil conformation. Positions 362 to 395 (TKQGSSKSRSWSKKKSSLLMEPREEGEVAVREEG) are disordered. Residues 382 to 395 (EPREEGEVAVREEG) are compositionally biased toward basic and acidic residues.

Belongs to the DnaJ family. C/III subfamily. Expressed constitutively at low levels in seedlings, roots, leaves, stems, flowers and siliques.

It localises to the membrane. Its function is as follows. Plays a continuous role in plant development probably in the structural organization of compartments. Seems to be involved in early gravitropic signal transduction within the gravity-perceiving cells (statocytes). The polypeptide is Chaperone protein dnaJ 39 (ATJ39) (Arabidopsis thaliana (Mouse-ear cress)).